The sequence spans 510 residues: NAD(P)H-quinone oxidoreductase subunit 2, chloroplastic (510 aa).

The next 13 helical transmembrane spans lie at 26-46, 57-77, 99-119, 124-144, 149-169, 184-204, 227-247, 295-315, 323-343, 354-374, 395-415, 418-438, and 484-504; these read LFDG…ILLL, IPWL…ALLF, IFQV…VEYI, MAIT…MFLC, LITI…LSGY, LLMG…LYGL, PGIS…LSPA, WHLL…LIAI, MLAY…IVGD, YMLF…LFGL, ALSL…AGFF, LYLF…IALV, and MIVC…IIAI.

Belongs to the complex I subunit 2 family. As to quaternary structure, NDH is composed of at least 16 different subunits, 5 of which are encoded in the nucleus.

The protein localises to the plastid. It is found in the chloroplast thylakoid membrane. The catalysed reaction is a plastoquinone + NADH + (n+1) H(+)(in) = a plastoquinol + NAD(+) + n H(+)(out). The enzyme catalyses a plastoquinone + NADPH + (n+1) H(+)(in) = a plastoquinol + NADP(+) + n H(+)(out). Its function is as follows. NDH shuttles electrons from NAD(P)H:plastoquinone, via FMN and iron-sulfur (Fe-S) centers, to quinones in the photosynthetic chain and possibly in a chloroplast respiratory chain. The immediate electron acceptor for the enzyme in this species is believed to be plastoquinone. Couples the redox reaction to proton translocation, and thus conserves the redox energy in a proton gradient. This chain is NAD(P)H-quinone oxidoreductase subunit 2, chloroplastic, found in Trachelium caeruleum (Blue throatwort).